A 310-amino-acid chain; its full sequence is tRNA dimethylallyltransferase (310 aa).

Residue 14–21 (GPTASGKS) participates in ATP binding. 16 to 21 (TASGKS) lines the substrate pocket. Interaction with substrate tRNA stretches follow at residues 39–42 (DSMQ) and 163–167 (QRIVR).

This sequence belongs to the IPP transferase family. Monomer. It depends on Mg(2+) as a cofactor.

It carries out the reaction adenosine(37) in tRNA + dimethylallyl diphosphate = N(6)-dimethylallyladenosine(37) in tRNA + diphosphate. Its function is as follows. Catalyzes the transfer of a dimethylallyl group onto the adenine at position 37 in tRNAs that read codons beginning with uridine, leading to the formation of N6-(dimethylallyl)adenosine (i(6)A). This is tRNA dimethylallyltransferase from Brucella abortus (strain S19).